Reading from the N-terminus, the 527-residue chain is Arginine--tRNA ligase (527 aa).

Residues 111-121 carry the 'HIGH' region motif; it reads ANPTGPLHIGH.

The protein belongs to the class-I aminoacyl-tRNA synthetase family. In terms of assembly, monomer.

It localises to the cytoplasm. The catalysed reaction is tRNA(Arg) + L-arginine + ATP = L-arginyl-tRNA(Arg) + AMP + diphosphate. This is Arginine--tRNA ligase from Campylobacter concisus (strain 13826).